Consider the following 420-residue polypeptide: ATP phosphoribosyltransferase regulatory subunit (420 aa).

It belongs to the class-II aminoacyl-tRNA synthetase family. HisZ subfamily. Heteromultimer composed of HisG and HisZ subunits.

It is found in the cytoplasm. It functions in the pathway amino-acid biosynthesis; L-histidine biosynthesis; L-histidine from 5-phospho-alpha-D-ribose 1-diphosphate: step 1/9. Functionally, required for the first step of histidine biosynthesis. May allow the feedback regulation of ATP phosphoribosyltransferase activity by histidine. In Bacillus cereus (strain ZK / E33L), this protein is ATP phosphoribosyltransferase regulatory subunit.